Here is a 394-residue protein sequence, read N- to C-terminus: Phosphoglycerate kinase (394 aa).

Substrate contacts are provided by residues 21-23 (DFN), Arg-36, 59-62 (HLGR), Arg-118, and Arg-151. Ser-183 bears the Phosphoserine mark. Lys-201 lines the ATP pocket. Thr-299 is modified (phosphothreonine). Residues Glu-323 and 350–353 (GGDS) each bind ATP.

The protein belongs to the phosphoglycerate kinase family. In terms of assembly, monomer.

The protein resides in the cytoplasm. It catalyses the reaction (2R)-3-phosphoglycerate + ATP = (2R)-3-phospho-glyceroyl phosphate + ADP. It participates in carbohydrate degradation; glycolysis; pyruvate from D-glyceraldehyde 3-phosphate: step 2/5. The chain is Phosphoglycerate kinase from Bacillus pumilus (strain SAFR-032).